The following is a 330-amino-acid chain: D-lactate dehydrogenase (330 aa).

Residues R155–I156, D175, M206–P207, N212, M233–R235, and D259 contribute to the NAD(+) site. Residue R235 is part of the active site. Residue E264 is part of the active site. H296 serves as the catalytic Proton donor.

Belongs to the D-isomer specific 2-hydroxyacid dehydrogenase family.

It carries out the reaction (R)-lactate + NAD(+) = pyruvate + NADH + H(+). The sequence is that of D-lactate dehydrogenase (ldhD) from Streptococcus pyogenes serotype M1.